Reading from the N-terminus, the 336-residue chain is GTP 3',8-cyclase (336 aa).

The Radical SAM core domain occupies 16–241 (AYRRTYYYLR…QSKGITDGPA (226 aa)). R25 provides a ligand contact to GTP. [4Fe-4S] cluster is bound by residues C32 and C36. Residue Y38 coordinates S-adenosyl-L-methionine. Residue C39 coordinates [4Fe-4S] cluster. A GTP-binding site is contributed by R75. G79 is an S-adenosyl-L-methionine binding site. T106 serves as a coordination point for GTP. S130 is an S-adenosyl-L-methionine binding site. Position 167 (K167) interacts with GTP. M201 is an S-adenosyl-L-methionine binding site. Residues C264 and C267 each coordinate [4Fe-4S] cluster. Position 269–271 (269–271 (RLR)) interacts with GTP. C281 is a [4Fe-4S] cluster binding site.

Belongs to the radical SAM superfamily. MoaA family. Monomer and homodimer. It depends on [4Fe-4S] cluster as a cofactor.

The catalysed reaction is GTP + AH2 + S-adenosyl-L-methionine = (8S)-3',8-cyclo-7,8-dihydroguanosine 5'-triphosphate + 5'-deoxyadenosine + L-methionine + A + H(+). The protein operates within cofactor biosynthesis; molybdopterin biosynthesis. Catalyzes the cyclization of GTP to (8S)-3',8-cyclo-7,8-dihydroguanosine 5'-triphosphate. The polypeptide is GTP 3',8-cyclase (Actinobacillus succinogenes (strain ATCC 55618 / DSM 22257 / CCUG 43843 / 130Z)).